Here is a 186-residue protein sequence, read N- to C-terminus: NADH-dependent FMN reductase SfnF (186 aa).

This sequence belongs to the SsuE family.

It carries out the reaction FMNH2 + NAD(+) = FMN + NADH + 2 H(+). Its function is as follows. Involved in the dimethyl sulfide degradation pathway. Catalyzes the NADH-dependent reduction of FMN. This chain is NADH-dependent FMN reductase SfnF, found in Pseudomonas putida (Arthrobacter siderocapsulatus).